Here is a 192-residue protein sequence, read N- to C-terminus: dTTP/UTP pyrophosphatase (192 aa).

The active-site Proton acceptor is Asp70.

The protein belongs to the Maf family. YhdE subfamily. A divalent metal cation serves as cofactor.

It is found in the cytoplasm. It catalyses the reaction dTTP + H2O = dTMP + diphosphate + H(+). The catalysed reaction is UTP + H2O = UMP + diphosphate + H(+). Its function is as follows. Nucleoside triphosphate pyrophosphatase that hydrolyzes dTTP and UTP. May have a dual role in cell division arrest and in preventing the incorporation of modified nucleotides into cellular nucleic acids. The chain is dTTP/UTP pyrophosphatase from Alkaliphilus oremlandii (strain OhILAs) (Clostridium oremlandii (strain OhILAs)).